The primary structure comprises 200 residues: MPENVVNPVRTATVSRKTKETDITVTVLIDGTGHGSINSGVAFLDHMLANFCRHSGFDMSLVCNGDLDVDDHHSVEDVALVIGSAISEALLDKTGLQRYGWAIIPMDEALARCALDLGGRSYCVFNAEFKRPVIEGFSTEMVEHFFVSLSRTMQANIHLAILEGKNTHHKIEALFKSFAYAMKDAVRITGTTIPSTKGKL.

It belongs to the imidazoleglycerol-phosphate dehydratase family.

The protein resides in the cytoplasm. It catalyses the reaction D-erythro-1-(imidazol-4-yl)glycerol 3-phosphate = 3-(imidazol-4-yl)-2-oxopropyl phosphate + H2O. It functions in the pathway amino-acid biosynthesis; L-histidine biosynthesis; L-histidine from 5-phospho-alpha-D-ribose 1-diphosphate: step 6/9. In Chlorobium phaeobacteroides (strain DSM 266 / SMG 266 / 2430), this protein is Imidazoleglycerol-phosphate dehydratase.